The sequence spans 470 residues: Argininosuccinate lyase (470 aa).

The protein belongs to the lyase 1 family. Argininosuccinate lyase subfamily.

Its subcellular location is the cytoplasm. The catalysed reaction is 2-(N(omega)-L-arginino)succinate = fumarate + L-arginine. It participates in amino-acid biosynthesis; L-arginine biosynthesis; L-arginine from L-ornithine and carbamoyl phosphate: step 3/3. This Leptospira borgpetersenii serovar Hardjo-bovis (strain JB197) protein is Argininosuccinate lyase.